Reading from the N-terminus, the 262-residue chain is Type III pantothenate kinase (262 aa).

5-12 (DAGNTRSK) contacts ATP. Substrate is bound by residues Tyr-102 and 110–113 (GSDR). The Proton acceptor role is filled by Asp-112. Asp-132 contributes to the K(+) binding site. Thr-135 is a binding site for ATP. Residue Thr-190 coordinates substrate.

This sequence belongs to the type III pantothenate kinase family. As to quaternary structure, homodimer. The cofactor is NH4(+). K(+) serves as cofactor.

It localises to the cytoplasm. The catalysed reaction is (R)-pantothenate + ATP = (R)-4'-phosphopantothenate + ADP + H(+). Its pathway is cofactor biosynthesis; coenzyme A biosynthesis; CoA from (R)-pantothenate: step 1/5. Its function is as follows. Catalyzes the phosphorylation of pantothenate (Pan), the first step in CoA biosynthesis. In Idiomarina loihiensis (strain ATCC BAA-735 / DSM 15497 / L2-TR), this protein is Type III pantothenate kinase.